The sequence spans 358 residues: Histidinol-phosphate aminotransferase (358 aa).

An N6-(pyridoxal phosphate)lysine modification is found at lysine 218.

This sequence belongs to the class-II pyridoxal-phosphate-dependent aminotransferase family. Histidinol-phosphate aminotransferase subfamily. In terms of assembly, homodimer. Requires pyridoxal 5'-phosphate as cofactor.

It carries out the reaction L-histidinol phosphate + 2-oxoglutarate = 3-(imidazol-4-yl)-2-oxopropyl phosphate + L-glutamate. It functions in the pathway amino-acid biosynthesis; L-histidine biosynthesis; L-histidine from 5-phospho-alpha-D-ribose 1-diphosphate: step 7/9. This Dehalococcoides mccartyi (strain ATCC BAA-2100 / JCM 16839 / KCTC 5957 / BAV1) protein is Histidinol-phosphate aminotransferase.